We begin with the raw amino-acid sequence, 252 residues long: MSLAKRIVPCLDVHAGRVVKGVNFVNLRDAGDPVEAARAYDEAGADELVFLDISATHEERAILLDVVARVAERVFIPLTVGGGVRSLEDARKLLLSGADKVSVNSAAVRRPELIRELADHFGAQAVVLAIDARWRGDFPEVHVAGGRVPTGLHAVEWAVKGVELGAGEILLTSMDRDGTKEGYDLRLTRMVAEAVGVPVIASGGAGRMEHFLEAFQAGAEAALAASVFHFGEIPIPKLKRYLAEKGVHVRLD.

Active-site residues include Asp12 and Asp131.

Belongs to the HisA/HisF family. Heterodimer of HisH and HisF.

It localises to the cytoplasm. It carries out the reaction 5-[(5-phospho-1-deoxy-D-ribulos-1-ylimino)methylamino]-1-(5-phospho-beta-D-ribosyl)imidazole-4-carboxamide + L-glutamine = D-erythro-1-(imidazol-4-yl)glycerol 3-phosphate + 5-amino-1-(5-phospho-beta-D-ribosyl)imidazole-4-carboxamide + L-glutamate + H(+). It functions in the pathway amino-acid biosynthesis; L-histidine biosynthesis; L-histidine from 5-phospho-alpha-D-ribose 1-diphosphate: step 5/9. Functionally, IGPS catalyzes the conversion of PRFAR and glutamine to IGP, AICAR and glutamate. The HisF subunit catalyzes the cyclization activity that produces IGP and AICAR from PRFAR using the ammonia provided by the HisH subunit. The protein is Imidazole glycerol phosphate synthase subunit HisF of Thermus thermophilus (strain ATCC 27634 / DSM 579 / HB8).